The chain runs to 422 residues: UDP-N-acetylglucosamine 1-carboxyvinyltransferase (422 aa).

K22 to N23 contacts phosphoenolpyruvate. UDP-N-acetyl-alpha-D-glucosamine is bound at residue R95. C119 serves as the catalytic Proton donor. 2-(S-cysteinyl)pyruvic acid O-phosphothioketal is present on C119. UDP-N-acetyl-alpha-D-glucosamine is bound by residues R124–Q128, D309, and V331.

This sequence belongs to the EPSP synthase family. MurA subfamily.

It localises to the cytoplasm. The enzyme catalyses phosphoenolpyruvate + UDP-N-acetyl-alpha-D-glucosamine = UDP-N-acetyl-3-O-(1-carboxyvinyl)-alpha-D-glucosamine + phosphate. It participates in cell wall biogenesis; peptidoglycan biosynthesis. Its function is as follows. Cell wall formation. Adds enolpyruvyl to UDP-N-acetylglucosamine. In Anaeromyxobacter dehalogenans (strain 2CP-1 / ATCC BAA-258), this protein is UDP-N-acetylglucosamine 1-carboxyvinyltransferase.